A 262-amino-acid polypeptide reads, in one-letter code: MQVDLLSSAQSAHALHLFHQHSPLVHCMTNDVVQTFTANTLLALGASPAMVIETEEASQFAAIASALLINVGTLTQPRAQAMSAAVEQATRSQTPWTLDPVAVGALDYRRRFCVELLSHKPTAIRGNASEIMALAGVANGGRGVDTTDAAANAIPAAQTLARETGAIVVVTGEVDYVTDGHRIIGIHGGDPLMTKVVGTGCALSAVVAACCALPGDTLENIASACHWMKQAGERAVARSEGPGSFVPHFLDALWQLTQEVQA.

Residue Met-50 participates in substrate binding. Residues Arg-125 and Thr-171 each coordinate ATP. Gly-198 contacts substrate.

The protein belongs to the Thz kinase family. It depends on Mg(2+) as a cofactor.

The catalysed reaction is 5-(2-hydroxyethyl)-4-methylthiazole + ATP = 4-methyl-5-(2-phosphooxyethyl)-thiazole + ADP + H(+). It participates in cofactor biosynthesis; thiamine diphosphate biosynthesis; 4-methyl-5-(2-phosphoethyl)-thiazole from 5-(2-hydroxyethyl)-4-methylthiazole: step 1/1. Functionally, catalyzes the phosphorylation of the hydroxyl group of 4-methyl-5-beta-hydroxyethylthiazole (THZ). This is Hydroxyethylthiazole kinase from Escherichia coli O45:K1 (strain S88 / ExPEC).